The following is a 495-amino-acid chain: Probable aminotransferase ACS12 (495 aa).

Lys-334 is modified (N6-(pyridoxal phosphate)lysine).

This sequence belongs to the class-I pyridoxal-phosphate-dependent aminotransferase family. In terms of assembly, homodimer. Requires pyridoxal 5'-phosphate as cofactor. As to expression, expressed in roots. Expressed at low level in leaves, stems, flowers and siliques.

Its function is as follows. Probable aminotransferase. Does not have 1-aminocyclopropane-1-carboxylate synthase (ACS) activity, suggesting that it is not involved in ethylene biosynthesis. This is Probable aminotransferase ACS12 (ACS12) from Arabidopsis thaliana (Mouse-ear cress).